The following is a 284-amino-acid chain: Trimeric intracellular cation channel type B (284 aa).

Residues 1-15 (MESFSELSLQFSQLS) lie on the Lumenal side of the membrane. A helical membrane pass occupies residues 16 to 32 (MFPFFETAHYLTSVMSA). Residues 33–44 (REQAGAVDVASR) lie on the Cytoplasmic side of the membrane. A helical transmembrane segment spans residues 45–68 (SPLASWFSSMLYCFGGGILSSILL). Over 69-79 (AEPPVGILSNT) the chain is Lumenal. The helical transmembrane segment at 80–99 (TSIILASAVWYMVYYFPYDL) threads the bilayer. Over 100 to 102 (FYN) the chain is Cytoplasmic. The helical transmembrane segment at 103–121 (CFFFLPIRLILAGMKEVTR) threads the bilayer. Residues K117 and R121 each coordinate a 1,2-diacyl-sn-glycero-3-phospho-(1D-myo-inositol-4,5-bisphosphate). Topologically, residues 122–139 (TWKILSGVAHAHSHYKDA) are lumenal. The helical transmembrane segment at 140–157 (MLVMITIGWARGAGGGLI) threads the bilayer. The Cytoplasmic segment spans residues 158-178 (SNFEQLVRGVWKPESNEFLKM). A helical membrane pass occupies residues 179-196 (SYPVKVTLIGAVLFTLQH). Residues 197–204 (GQYLPISR) are Lumenal-facing. A helical membrane pass occupies residues 205-225 (HNLMFIYTLFLILIKVTMMLT). The Cytoplasmic segment spans residues 226 to 284 (RSTASPFLPLETSLQHILFSRQQIPAEVRESPSSSGDKGKPSKKTLDKDSGEQDNKKDN). Positions 250–284 (PAEVRESPSSSGDKGKPSKKTLDKDSGEQDNKKDN) are disordered. Residues 262–284 (DKGKPSKKTLDKDSGEQDNKKDN) show a composition bias toward basic and acidic residues.

It belongs to the TMEM38 family. In terms of assembly, homotrimer; conformation seems to be controled by binding to diacylglycerol (DAG).

Its subcellular location is the endoplasmic reticulum membrane. It carries out the reaction K(+)(in) = K(+)(out). Channel activity is activated by increased cytosolic Ca(2+) levels and blocked by luminal high Ca(2+) levels. In terms of biological role, intracellular monovalent cation channel required for maintenance of rapid intracellular calcium release. Acts as a potassium counter-ion channel that functions in synchronization with calcium release from intracellular stores. Activated by increased cytosolic Ca(2+) levels. This is Trimeric intracellular cation channel type B (tmem38b) from Xenopus tropicalis (Western clawed frog).